The sequence spans 76 residues: Ovarian cancer-related protein 1 (76 aa).

The polypeptide is Ovarian cancer-related protein 1 (OCR1) (Homo sapiens (Human)).